A 1047-amino-acid chain; its full sequence is Protein HIRA homolog (1047 aa).

WD repeat units follow at residues 11-53 (HDDK…SDKA), 68-107 (QHLA…SGVF), 127-166 (GHDG…HSVA), 170-209 (GHTG…LSHT), 218-263 (GGTT…KDFV), 264-319 (GHRK…PMVV), and 323-364 (LFNA…KAIS). Disordered regions lie at residues 401-435 (QGDK…GKRR), 509-549 (KTQP…PSNL), 882-914 (FATP…TEKD), and 933-1047 (TGTS…TDQT). 2 stretches are compositionally biased toward polar residues: residues 409–424 (PLSN…ISKQ) and 509–518 (KTQPASQRRQ). A Phosphoserine modification is found at S519. Residues 889-901 (QQKTASSAGSSPR) show a composition bias toward polar residues. Low complexity-rich tracts occupy residues 933 to 972 (TGTS…SSLS) and 1015 to 1047 (VSPA…TDQT).

Belongs to the WD repeat HIR1 family.

The protein localises to the nucleus. In terms of biological role, required for the periodic repression of histone gene transcription during the cell cycle. Required for replication-independent chromatin assembly. Promotes remodeling of sperm chromatin following fertilization via the incorporation of histone H3.3 and histone H4. The chain is Protein HIRA homolog (Hira) from Drosophila melanogaster (Fruit fly).